The primary structure comprises 80 residues: Serine protease inhibitor Kazal-type 1 (80 aa).

The N-terminal stretch at 1–23 (MKVAVIFLLSALALLSLAGNTFS) is a signal peptide. A Kazal-like domain is found at 27 to 80 (TGKEASCHDAVAGCPRIYDPVCGTDGITYANECVLCFENRKRIEPVLIRKGGPC). 3 disulfides stabilise this stretch: C33–C62, C40–C59, and C48–C80.

In terms of tissue distribution, in the genital tract, expressed only in male accessory glands including seminal vesicle, coagulating gland and prostate.

Its subcellular location is the secreted. In terms of biological role, serine protease inhibitor which exhibits anti-trypsin activity. In the pancreas, protects against trypsin-catalyzed premature activation of zymogens. Its function is as follows. In the male reproductive tract, binds to sperm heads where it modulates sperm capacitance by inhibiting calcium uptake and nitrogen oxide (NO) production. This chain is Serine protease inhibitor Kazal-type 1, found in Mus musculus (Mouse).